Here is a 379-residue protein sequence, read N- to C-terminus: Heme chaperone HemW (379 aa).

Residues M1 to N232 enclose the Radical SAM core domain. Y9 contributes to the S-adenosyl-L-methionine binding site. Positions 15, 19, and 22 each coordinate [4Fe-4S] cluster. S-adenosyl-L-methionine-binding positions include G60, G61 to T62, E93, Q120, R132, and D157.

It belongs to the anaerobic coproporphyrinogen-III oxidase family. HemW subfamily. As to quaternary structure, homodimer.

Its subcellular location is the cytoplasm. It localises to the cell membrane. Functionally, could serve in the delivery of heme to a membrane-localized target protein. Binds one molecule of heme per monomer, possibly covalently; heme and Fe-S cluster binding are independent. Incubation with the reductant sodium dithionite increases binding. Does not have coproporphyrinogen III dehydrogenase activity in vitro, does not complement an E.coli hemN deletion in vivo. Binds 1 Fe-S cluster, it is probably [4Fe-4S]. The cluster is coordinated with 3 cysteines and an exchangeable S-adenosyl-L-methionine; only dimeric protein has the cluster. This chain is Heme chaperone HemW, found in Lactococcus lactis subsp. lactis (strain IL1403) (Streptococcus lactis).